The primary structure comprises 359 residues: 1-deoxy-D-xylulose 5-phosphate reductoisomerase (359 aa).

6 residues coordinate NADPH: threonine 12, glycine 13, serine 14, isoleucine 15, lysine 38, and asparagine 39. Residue lysine 105 coordinates 1-deoxy-D-xylulose 5-phosphate. Glutamate 106 serves as a coordination point for NADPH. Aspartate 130 is a binding site for Mn(2+). 1-deoxy-D-xylulose 5-phosphate is bound by residues serine 131, glutamate 132, serine 152, and histidine 175. Residue glutamate 132 coordinates Mn(2+). Residue glycine 181 coordinates NADPH. 4 residues coordinate 1-deoxy-D-xylulose 5-phosphate: serine 188, asparagine 193, lysine 194, and glutamate 197. Glutamate 197 contacts Mn(2+).

Belongs to the DXR family. It depends on Mg(2+) as a cofactor. Mn(2+) is required as a cofactor.

It carries out the reaction 2-C-methyl-D-erythritol 4-phosphate + NADP(+) = 1-deoxy-D-xylulose 5-phosphate + NADPH + H(+). It functions in the pathway isoprenoid biosynthesis; isopentenyl diphosphate biosynthesis via DXP pathway; isopentenyl diphosphate from 1-deoxy-D-xylulose 5-phosphate: step 1/6. Catalyzes the NADPH-dependent rearrangement and reduction of 1-deoxy-D-xylulose-5-phosphate (DXP) to 2-C-methyl-D-erythritol 4-phosphate (MEP). The sequence is that of 1-deoxy-D-xylulose 5-phosphate reductoisomerase from Pseudothermotoga lettingae (strain ATCC BAA-301 / DSM 14385 / NBRC 107922 / TMO) (Thermotoga lettingae).